Consider the following 337-residue polypeptide: MIEIDGSFGEGGGQILRTSLTLSVITGKPFRIFNIRANRPNPGLQRQHLWAVKAMKMISNAETKGDEVGSKELIFVPHEIKGNTNIDIDVGTAGSVTLIIQTVLPAIINKNVRIRIKGGTDVPKSPTIDYIRLVYLEILRKIGIEAKLNLIKRGHYPEGGGEVIIENVNGNPSAFSLLELGKLTIIKGISHVSSLPAHIAERQMNSAREILSKLGVPIEIETDVRQGEVSKGSGIALAAIGEKSIIGADSLGERGKRAEIVGEEAARILINNLNTKASVDIHMSDMLMIFASLYGGEYIGAELTSHAYTNMEIIKKFLDIKIDVSGKRPFRFKAKIF.

Residues Gln-101 and 282 to 285 contribute to the ATP site; that span reads HMSD. His-306 (tele-AMP-histidine intermediate) is an active-site residue.

Belongs to the RNA 3'-terminal cyclase family. Type 1 subfamily.

Its subcellular location is the cytoplasm. It carries out the reaction a 3'-end 3'-phospho-ribonucleotide-RNA + ATP = a 3'-end 2',3'-cyclophospho-ribonucleotide-RNA + AMP + diphosphate. Catalyzes the conversion of 3'-phosphate to a 2',3'-cyclic phosphodiester at the end of RNA. The mechanism of action of the enzyme occurs in 3 steps: (A) adenylation of the enzyme by ATP; (B) transfer of adenylate to an RNA-N3'P to produce RNA-N3'PP5'A; (C) and attack of the adjacent 2'-hydroxyl on the 3'-phosphorus in the diester linkage to produce the cyclic end product. The biological role of this enzyme is unknown but it is likely to function in some aspects of cellular RNA processing. The chain is RNA 3'-terminal phosphate cyclase from Saccharolobus islandicus (strain L.S.2.15 / Lassen #1) (Sulfolobus islandicus).